The chain runs to 343 residues: Glucokinase (343 aa).

Residue 21 to 26 (ADVGGT) coordinates ATP.

It belongs to the bacterial glucokinase family.

Its subcellular location is the cytoplasm. The catalysed reaction is D-glucose + ATP = D-glucose 6-phosphate + ADP + H(+). This chain is Glucokinase, found in Cupriavidus pinatubonensis (strain JMP 134 / LMG 1197) (Cupriavidus necator (strain JMP 134)).